Here is a 485-residue protein sequence, read N- to C-terminus: N-succinylglutamate 5-semialdehyde dehydrogenase (485 aa).

An NAD(+)-binding site is contributed by 220–225 (GSANTG). Active-site residues include Glu243 and Cys278.

The protein belongs to the aldehyde dehydrogenase family. AstD subfamily.

It carries out the reaction N-succinyl-L-glutamate 5-semialdehyde + NAD(+) + H2O = N-succinyl-L-glutamate + NADH + 2 H(+). The protein operates within amino-acid degradation; L-arginine degradation via AST pathway; L-glutamate and succinate from L-arginine: step 4/5. In terms of biological role, catalyzes the NAD-dependent reduction of succinylglutamate semialdehyde into succinylglutamate. The chain is N-succinylglutamate 5-semialdehyde dehydrogenase from Vibrio parahaemolyticus serotype O3:K6 (strain RIMD 2210633).